The sequence spans 302 residues: tRNA pseudouridine synthase B (302 aa).

The Nucleophile role is filled by Asp38.

Belongs to the pseudouridine synthase TruB family. Type 1 subfamily.

The catalysed reaction is uridine(55) in tRNA = pseudouridine(55) in tRNA. Its function is as follows. Responsible for synthesis of pseudouridine from uracil-55 in the psi GC loop of transfer RNAs. This chain is tRNA pseudouridine synthase B, found in Geobacillus thermodenitrificans (strain NG80-2).